The chain runs to 155 residues: Endoribonuclease YbeY (155 aa).

Zn(2+) contacts are provided by His-114, His-118, and His-124.

The protein belongs to the endoribonuclease YbeY family. Requires Zn(2+) as cofactor.

The protein resides in the cytoplasm. Functionally, single strand-specific metallo-endoribonuclease involved in late-stage 70S ribosome quality control and in maturation of the 3' terminus of the 16S rRNA. In Escherichia coli O7:K1 (strain IAI39 / ExPEC), this protein is Endoribonuclease YbeY.